The chain runs to 362 residues: Putative G-protein coupled receptor B0244.5 (362 aa).

Residues 1-47 lie on the Extracellular side of the membrane; it reads MQNIFENCSYHSKYEPYFLNCTNTTNQCVLIQDVGIIQAIDFWANLC. N-linked (GlcNAc...) asparagine glycans are attached at residues N7, N20, and N23. The helical transmembrane segment at 48 to 68 threads the bilayer; sequence IPFTLFVIAFILNGYYLSILI. Residues 69-81 lie on the Cytoplasmic side of the membrane; it reads PEFRKMNDTTKKQ. The helical transmembrane segment at 82 to 102 threads the bilayer; the sequence is YIFVVSRGISSLSASSIMMVL. The Extracellular segment spans residues 103–125; the sequence is RLLKMLSTSFTVYFLFFLIDDLS. The chain crosses the membrane as a helical span at residues 126–145; it reads FYSLLGSYVGSTLLLYLATV. Over 146–161 the chain is Cytoplasmic; it reads RPIFYSIQISVRIVYK. The helical transmembrane segment at 162–182 threads the bilayer; sequence FALVNVLLAVVLAVTTAIFQA. The Extracellular portion of the chain corresponds to 183 to 204; sequence AEVSDGFFHCDVQHCQPIINIA. The helical transmembrane segment at 205 to 225 threads the bilayer; the sequence is MFVIIATSFLIPIITLTFVLV. The Cytoplasmic portion of the chain corresponds to 226-255; it reads TLCFQKSRTQSIGNFTVDNSVYKSARTRLA. Residues 256-276 form a helical membrane-spanning segment; the sequence is WTLFTFTLISLTEMIPSSFLV. Topologically, residues 277 to 295 are extracellular; sequence NLRVEDTITICVNFYQADH. A helical membrane pass occupies residues 296–316; sequence LFIPAIMNSFQTLAWGIALIV. Topologically, residues 317–362 are cytoplasmic; it reads DPLCALLFDPRIRKVWVEHVSRLSIIIGRSFEACCHSNLNKEIQDK.

It belongs to the G-protein coupled receptor 1 family. B0244 subfamily.

Its subcellular location is the cell membrane. The chain is Putative G-protein coupled receptor B0244.5 from Caenorhabditis elegans.